Consider the following 469-residue polypeptide: UDP-N-acetylmuramoylalanine--D-glutamate ligase (469 aa).

121 to 127 is a binding site for ATP; the sequence is GTNGKST.

It belongs to the MurCDEF family.

The protein resides in the cytoplasm. The catalysed reaction is UDP-N-acetyl-alpha-D-muramoyl-L-alanine + D-glutamate + ATP = UDP-N-acetyl-alpha-D-muramoyl-L-alanyl-D-glutamate + ADP + phosphate + H(+). It participates in cell wall biogenesis; peptidoglycan biosynthesis. Cell wall formation. Catalyzes the addition of glutamate to the nucleotide precursor UDP-N-acetylmuramoyl-L-alanine (UMA). The protein is UDP-N-acetylmuramoylalanine--D-glutamate ligase of Agrobacterium fabrum (strain C58 / ATCC 33970) (Agrobacterium tumefaciens (strain C58)).